We begin with the raw amino-acid sequence, 66 residues long: uncharacterized protein (66 aa).

This is an uncharacterized protein from Escherichia coli O157:H7.